Consider the following 75-residue polypeptide: Phi-liotoxin-Lw1a (75 aa).

The signal sequence occupies residues 1–25 (MNFATKVSLLLLAIAVIVIVEGGEG). Positions 26-39 (DSWFEEHEESDTER) are excised as a propeptide. Disulfide bonds link Cys50–Cys62 and Cys56–Cys68.

As to expression, expressed by the venom gland.

It localises to the secreted. Affects the activity of both ryanodine-sensitive calcium-release channels RyR1 and RyR2 with high potency. At lower concentrations the toxin increases full openings of the RyRs, and at higher concentrations it inhibits full openings and induce openings to subconductance levels and reduces the number of full conductance openings. The different actions may be attributed to the toxins binding at different sites on the RyRs, with binding at a high-affinity site mediating the increase in full openings and the induction of subconductance states evoked upon binding to a lower-affinity site. Insect-selective toxin that provokes a dose-dependent contractile paralysis in crickets and blowfly larvae, followed by death. The protein is Phi-liotoxin-Lw1a of Hormurus waigiensis (Australian rainforest scorpion).